Consider the following 208-residue polypeptide: Methyl-CpG-binding domain protein 3-like 3 (208 aa).

The protein belongs to the MBD3L family.

This is Methyl-CpG-binding domain protein 3-like 3 (MBD3L3) from Homo sapiens (Human).